The sequence spans 397 residues: 3-ketoacyl-CoA thiolase, mitochondrial (397 aa).

The transit peptide at 1-16 (MALLRGVFIVAAKRTP) directs the protein to the mitochondrion; not cleaved. Lysine 25 is subject to N6-acetyllysine; alternate. Lysine 25 is modified (N6-succinyllysine; alternate). Serine 28 bears the Phosphoserine mark. Lysine 45 carries the N6-succinyllysine modification. Residue cysteine 92 is the Acyl-thioester intermediate of the active site. Threonine 119 is modified (phosphothreonine). Serine 121 carries the phosphoserine modification. Tyrosine 127 carries the phosphotyrosine modification. Threonine 136 carries the post-translational modification Phosphothreonine. N6-acetyllysine; alternate is present on residues lysine 137, lysine 143, lysine 158, lysine 171, lysine 191, and lysine 209. N6-succinyllysine; alternate is present on residues lysine 137, lysine 143, lysine 158, lysine 171, lysine 191, and lysine 209. Residues lysine 211, lysine 212, and lysine 214 each carry the N6-succinyllysine modification. Residues arginine 224 and threonine 227 each coordinate CoA. The residue at position 234 (lysine 234) is an N6-acetyllysine; alternate. Lysine 234 bears the N6-succinyllysine; alternate mark. N6-succinyllysine is present on lysine 240. Lysine 241 carries the post-translational modification N6-acetyllysine. Residue serine 251 participates in CoA binding. Residues lysine 269 and lysine 270 each carry the N6-acetyllysine modification. Position 305 is an N6-acetyllysine; alternate (lysine 305). An N6-succinyllysine; alternate modification is found at lysine 305. At serine 310 the chain carries Phosphoserine. Residue lysine 312 is modified to N6-acetyllysine; alternate. N6-succinyllysine; alternate is present on lysine 312. Lysine 340 is subject to N6-acetyllysine. A Phosphoserine modification is found at serine 344. N6-acetyllysine is present on lysine 375. The active-site Proton donor/acceptor is cysteine 382.

This sequence belongs to the thiolase-like superfamily. Thiolase family. Homotetramer. Interacts with BNIP3.

Its subcellular location is the mitochondrion. It carries out the reaction an acyl-CoA + acetyl-CoA = a 3-oxoacyl-CoA + CoA. It catalyses the reaction 2 acetyl-CoA = acetoacetyl-CoA + CoA. The enzyme catalyses acetyl-CoA + H2O = acetate + CoA + H(+). The catalysed reaction is propanoyl-CoA + H2O = propanoate + CoA + H(+). It carries out the reaction butanoyl-CoA + H2O = butanoate + CoA + H(+). It catalyses the reaction hexanoyl-CoA + H2O = hexanoate + CoA + H(+). The enzyme catalyses octanoyl-CoA + H2O = octanoate + CoA + H(+). The catalysed reaction is decanoyl-CoA + H2O = decanoate + CoA + H(+). It carries out the reaction dodecanoyl-CoA + H2O = dodecanoate + CoA + H(+). It catalyses the reaction tetradecanoyl-CoA + H2O = tetradecanoate + CoA + H(+). The enzyme catalyses hexadecanoyl-CoA + H2O = hexadecanoate + CoA + H(+). Its pathway is lipid metabolism; fatty acid beta-oxidation. In terms of biological role, in the production of energy from fats, this is one of the enzymes that catalyzes the last step of the mitochondrial beta-oxidation pathway, an aerobic process breaking down fatty acids into acetyl-CoA. Using free coenzyme A/CoA, catalyzes the thiolytic cleavage of medium- to long-chain unbranched 3-oxoacyl-CoAs into acetyl-CoA and a fatty acyl-CoA shortened by two carbon atoms. Also catalyzes the condensation of two acetyl-CoA molecules into acetoacetyl-CoA and could be involved in the production of ketone bodies. Also displays hydrolase activity on various fatty acyl-CoAs. Thereby, could be responsible for the production of acetate in a side reaction to beta-oxidation. Abolishes BNIP3-mediated apoptosis and mitochondrial damage. The chain is 3-ketoacyl-CoA thiolase, mitochondrial (Acaa2) from Mus musculus (Mouse).